Reading from the N-terminus, the 364-residue chain is UDP-3-O-acylglucosamine N-acyltransferase (364 aa).

H257 serves as the catalytic Proton acceptor.

It belongs to the transferase hexapeptide repeat family. LpxD subfamily. In terms of assembly, homotrimer.

The catalysed reaction is a UDP-3-O-[(3R)-3-hydroxyacyl]-alpha-D-glucosamine + a (3R)-hydroxyacyl-[ACP] = a UDP-2-N,3-O-bis[(3R)-3-hydroxyacyl]-alpha-D-glucosamine + holo-[ACP] + H(+). It participates in bacterial outer membrane biogenesis; LPS lipid A biosynthesis. In terms of biological role, catalyzes the N-acylation of UDP-3-O-acylglucosamine using 3-hydroxyacyl-ACP as the acyl donor. Is involved in the biosynthesis of lipid A, a phosphorylated glycolipid that anchors the lipopolysaccharide to the outer membrane of the cell. The polypeptide is UDP-3-O-acylglucosamine N-acyltransferase (Paracoccus denitrificans (strain Pd 1222)).